A 50-amino-acid chain; its full sequence is Large ribosomal subunit protein bL32 (50 aa).

The span at 1–26 shows a compositional bias: basic residues; it reads MAVPKRRVSHTRSAKRRTHYKITLKK. Residues 1-50 form a disordered region; that stretch reads MAVPKRRVSHTRSAKRRTHYKITLKKPVKDSDGSWKMPHMVNPNTGEYKN.

This sequence belongs to the bacterial ribosomal protein bL32 family.

This is Large ribosomal subunit protein bL32 from Aliarcobacter butzleri (strain RM4018) (Arcobacter butzleri).